A 182-amino-acid chain; its full sequence is Carbonic anhydrase (182 aa).

Mg(2+)-binding residues include histidine 64, histidine 81, and histidine 86.

Belongs to the gamma-class carbonic anhydrase family. In terms of assembly, homotrimer. It depends on Mg(2+) as a cofactor. The cofactor is Zn(2+).

The enzyme catalyses hydrogencarbonate + H(+) = CO2 + H2O. Functionally, reversible hydration of carbon dioxide. The chain is Carbonic anhydrase from Geobacillus kaustophilus (strain HTA426).